The chain runs to 443 residues: Exodeoxyribonuclease 7 large subunit (443 aa).

The protein belongs to the XseA family. In terms of assembly, heterooligomer composed of large and small subunits.

Its subcellular location is the cytoplasm. The enzyme catalyses Exonucleolytic cleavage in either 5'- to 3'- or 3'- to 5'-direction to yield nucleoside 5'-phosphates.. Functionally, bidirectionally degrades single-stranded DNA into large acid-insoluble oligonucleotides, which are then degraded further into small acid-soluble oligonucleotides. The chain is Exodeoxyribonuclease 7 large subunit from Vibrio parahaemolyticus serotype O3:K6 (strain RIMD 2210633).